The sequence spans 288 residues: MKIPEEEFLAPGHRGCAGCGATVGVRLALKVLGKNTVAVSSTGCLEVITTPYPETAWEIPWIHVAFENAAAVASGVERALRARGRGEVNVVAFAGDGGTADIGLQSLSGAMERGHNIIYICYDNEAYMNTGIQRSASTPYGASTTTSPHGKESFGEDRPKKNMPLIMAAHGVPYVATASISYPEDFMEKVRKARDIEGPAYIHLHQPCTTGWGFDPSKTVELGRLAVETGSWILYEIEDGDFRVTYRPVQRKPVEEYLNAQKRFRHLTEEQKAKIQEYVDSVCQELRI.

[4Fe-4S] cluster contacts are provided by Cys-16, Cys-19, and Cys-44. A compositionally biased stretch (polar residues) spans 137-148 (STPYGASTTTSP). The interval 137-159 (STPYGASTTTSPHGKESFGEDRP) is disordered. Basic and acidic residues predominate over residues 149 to 159 (HGKESFGEDRP). Cys-208 contributes to the [4Fe-4S] cluster binding site.

In terms of assembly, heterotetramer of one alpha, one beta, one delta and one gamma chain. It depends on [4Fe-4S] cluster as a cofactor.

It catalyses the reaction 2 oxidized [2Fe-2S]-[ferredoxin] + pyruvate + CoA = 2 reduced [2Fe-2S]-[ferredoxin] + acetyl-CoA + CO2 + H(+). This Methanothermobacter marburgensis (strain ATCC BAA-927 / DSM 2133 / JCM 14651 / NBRC 100331 / OCM 82 / Marburg) (Methanobacterium thermoautotrophicum) protein is Pyruvate synthase subunit PorB (porB).